The primary structure comprises 108 residues: Glutaredoxin-1 (108 aa).

Residues 3 to 106 form the Glutaredoxin domain; sequence EEFVQQRLAN…DILSSIGVLR (104 aa). A disulfide bridge connects residues Cys-23 and Cys-26.

It belongs to the glutaredoxin family.

It localises to the virion. In terms of biological role, has thioltransferase and dehydroascorbate reductase activities. The chain is Glutaredoxin-1 (OPG075) from Camelpox virus (strain M-96).